Reading from the N-terminus, the 133-residue chain is Large ribosomal subunit protein bL20 (133 aa).

It belongs to the bacterial ribosomal protein bL20 family.

Binds directly to 23S ribosomal RNA and is necessary for the in vitro assembly process of the 50S ribosomal subunit. It is not involved in the protein synthesizing functions of that subunit. This Bartonella bacilliformis (strain ATCC 35685 / KC583 / Herrer 020/F12,63) protein is Large ribosomal subunit protein bL20.